A 230-amino-acid chain; its full sequence is tRNA (cytidine-2'-O-)-methyltransferase TrmJ (230 aa).

S-adenosyl-L-methionine is bound by residues Thr79–Gly81, Gly115, Ile135, and Pro142–Met144.

It belongs to the class IV-like SAM-binding methyltransferase superfamily. RNA methyltransferase TrmH family. As to quaternary structure, homodimer.

The protein localises to the cytoplasm. It carries out the reaction cytidine(32) in tRNA + S-adenosyl-L-methionine = 2'-O-methylcytidine(32) in tRNA + S-adenosyl-L-homocysteine + H(+). In terms of biological role, catalyzes the formation of 2'O-methylated cytidine (Cm32) at position 32 in tRNA. This is tRNA (cytidine-2'-O-)-methyltransferase TrmJ from Methanocaldococcus jannaschii (strain ATCC 43067 / DSM 2661 / JAL-1 / JCM 10045 / NBRC 100440) (Methanococcus jannaschii).